The following is an 834-amino-acid chain: Enhancer of filamentation 1 (834 aa).

Residues 1–505 (MKYKNLMARA…HQILSQTSHD (505 aa)) form a required for interaction with ITCH region. Residues 3–65 (YKNLMARALY…PGNRVKLLIG (63 aa)) enclose the SH3 domain. Residues Y92, Y164, Y166, Y177, Y189, Y214, and Y223 each carry the phosphotyrosine; by ABL1 modification. The tract at residues 102-229 (RDTIYQVPPS…KGVYAIPPSA (128 aa)) is interacts strongly with spindle-regulatory protein D1M1. Residues 238–260 (EKDYDFPPPMRQAGRPDLRPEGV) form a disordered region. Residue Y279 is modified to Phosphotyrosine; by ABL1. The segment at 291–316 (ARRHQSLSPNHPPPQLGQSVGSQNDA) is disordered. S296 bears the Phosphoserine mark. The span at 306-315 (LGQSVGSQND) shows a compositional bias: polar residues. Y317 carries the post-translational modification Phosphotyrosine; by ABL1. 2 disordered regions span residues 328-398 (PPAE…SPAQ) and 560-623 (GPGS…GSER). Residues 332 to 344 (TSEKANPQERDGV) are compositionally biased toward basic and acidic residues. The segment at 351 to 834 (NPPDAKGSRD…KRSLLEMATF (484 aa)) is interacts with CTTN. The Caspase cleavage related site motif lies at 360-363 (DLVD). S369 bears the Phosphoserine mark. Over residues 369–395 (SFSSTGSTRSNMSTSSTSSKESSLSAS) the composition is skewed to low complexity. The tract at residues 710–760 (FYYDQCETHFISLLNAIDALFSCVSSAQPPRIFVAHSKFVILSAHKLVFIG) is divergent helix-loop-helix motif. Positions 710–834 (FYYDQCETHF…KRSLLEMATF (125 aa)) are required for interaction with PLK1. Phosphoserine; by CSNK1D and CSNK1E is present on S780. The residue at position 804 (T804) is a Phosphothreonine; by CSNK1E.

Belongs to the CAS family. In terms of assembly, homodimer. Forms heterodimers with BCAR1/p130cas. Forms complexes with PTK2B/RAFTK, adapter protein CRKL and LYN kinase. Part of a complex composed of NEDD9, AURKA and CTTN; within the complex NEDD9 acts as a scaffold protein and is required for complex formation. Part of a ternary complex composed of SMAD3, ITCH/AIP4 and NEDD9/HEF1; within the complex NEDD9/HEF1 interacts (via N-terminus) with ITCH/AIP4 (via WW domains); the complex mediates ubiquitination and proteasomal degradation of NEDD9/HEF1. Interacts with SMAD3; the interaction promotes NEDD9 ubiquitination and proteasomal degradation. Interacts with ID2. Interacts with CTTN (via N-terminus). Interacts with MICAL. Interacts with TXNL4/DIM1. Interacts with BCAR3 (via Ras-GEF domain). Interacts with SH2D3C isoform 1 and isoform 2. Interacts with ECT2. Interacts with PTPN11/SHP-2 (via SH2 domains); the interaction is enhanced when NEDD9/CAS-L is tyrosine phosphorylated. Interacts (via C-terminus) with PLK1 (via polo box domains). Interacts with NKX2-5. Interacts with SMAD3; the interaction is inhibited by oxidation of NEDD9. Interacts with NEDD9/HEF1; interaction is induced by CXCL12 promotion of ABL-mediated phosphorylation of NEDD9/HEF1. Interacts (via SH3 domain) with PTK2/FAK. Interacts with FYN; in the presence of PTK2. Interacts with INPPL1/SHIP2. In terms of processing, cell cycle-regulated processing produces four isoforms: p115, p105, p65, and p55. Isoform p115 arises from p105 phosphorylation and appears later in the cell cycle. Isoform p55 arises from p105 as a result of cleavage at a caspase cleavage-related site and it appears specifically at mitosis. The p65 isoform is poorly detected. Post-translationally, polyubiquitinated by ITCH/AIP4, leading to proteasomal degradation. PTK2/FAK1 phosphorylates the protein at the YDYVHL motif (conserved among all cas proteins) following integrin stimulation. The SRC family kinases (FYN, SRC, LCK and CRK) are recruited to the phosphorylated sites and can phosphorylate other tyrosine residues. Ligation of either integrin beta-1 or B-cell antigen receptor on tonsillar B-cells and B-cell lines promotes tyrosine phosphorylation and both integrin and BCR-mediated tyrosine phosphorylation requires an intact actin network. Phosphorylation is required to recruit NEDD9 to T-cell receptor microclusters at the periphery of newly formed immunological synapses. In fibroblasts transformation with oncogene v-ABL results in an increase in tyrosine phosphorylation. Transiently phosphorylated following CD3 cross-linking and this phosphorylated form binds to CRKL and C3G. A mutant lacking the SH3 domain is phosphorylated upon CD3 cross-linking but not upon integrin beta-1 cross-linking. Tyrosine phosphorylation occurs upon stimulation of the G-protein coupled C1a calcitonin receptor. Calcitonin-stimulated tyrosine phosphorylation is mediated by calcium- and protein kinase C-dependent mechanisms and requires the integrity of the actin cytoskeleton. Phosphorylation at Ser-369 induces proteasomal degradation. Phosphorylated by LYN. Phosphorylation at Ser-780 by CSNK1D or CSNK1E, or phosphorylation of Thr-804 by CSNK1E enhances the interaction of NEDD9 with PLK1. Expressed in B-cells (at protein level). Expressed in the respiratory epithelium of the main bronchi to the bronchioles in the lungs (at protein level). High levels detected in kidney, lung, and placenta. Expressed in lymphocytes.

Its subcellular location is the cytoplasm. The protein localises to the cell cortex. It localises to the nucleus. The protein resides in the golgi apparatus. It is found in the cell projection. Its subcellular location is the lamellipodium. The protein localises to the cell junction. It localises to the focal adhesion. The protein resides in the cytoskeleton. It is found in the spindle pole. Its subcellular location is the cilium. The protein localises to the cilium basal body. It localises to the basolateral cell membrane. The protein resides in the spindle. Scaffolding protein which plays a central coordinating role for tyrosine-kinase-based signaling related to cell adhesion. As a focal adhesion protein, plays a role in embryonic fibroblast migration. May play an important role in integrin beta-1 or B cell antigen receptor (BCR) mediated signaling in B- and T-cells. Integrin beta-1 stimulation leads to recruitment of various proteins including CRKL and SHPTP2 to the tyrosine phosphorylated form. Promotes adhesion and migration of lymphocytes; as a result required for the correct migration of lymphocytes to the spleen and other secondary lymphoid organs. Plays a role in the organization of T-cell F-actin cortical cytoskeleton and the centralization of T-cell receptor microclusters at the immunological synapse. Negatively regulates cilia outgrowth in polarized cysts. Modulates cilia disassembly via activation of AURKA-mediated phosphorylation of HDAC6 and subsequent deacetylation of alpha-tubulin. Positively regulates RANKL-induced osteoclastogenesis. Required for the maintenance of hippocampal dendritic spines in the dentate gyrus and CA1 regions, thereby involved in spatial learning and memory. This Homo sapiens (Human) protein is Enhancer of filamentation 1.